The following is a 333-amino-acid chain: Protein FAM170A (333 aa).

Disordered regions lie at residues 1–45 (MKRR…GVGE), 73–107 (LQDS…PSYK), and 143–214 (ETSE…AKTP). Residues 10 to 29 (LEIEESKEAGISKSQEDISH) are compositionally biased toward basic and acidic residues. A compositionally biased stretch (low complexity) spans 92 to 105 (TTAPSQQASSSCPS). The span at 143 to 156 (ETSESLEKQPRMEE) shows a compositional bias: basic and acidic residues. Residues 170–179 (SDVSTRNLLS) are compositionally biased toward polar residues. Residues 185–196 (GEEKEHEEKPES) are compositionally biased toward basic and acidic residues. Threonine 213 carries the phosphothreonine modification. The C2H2-type; degenerate zinc finger occupies 224–248 (FRCMACCRVFATMESLQEHVQYGIR). Positions 267-333 (MESESTQEEE…RKDHCDNSGS (67 aa)) are disordered. Acidic residues predominate over residues 271–281 (STQEEEEDHTE). Residues 282 to 293 (ETEKPKEEKAEE) show a composition bias toward basic and acidic residues. Serine 308 is subject to Phosphoserine.

Belongs to the FAM170 family. Testis-specific.

The protein resides in the nucleus. In terms of biological role, acts as a nuclear transcription factor that positively regulates the expression of heat shock genes. Binds to heat shock promoter elements (HSE). The chain is Protein FAM170A (Fam170a) from Mus musculus (Mouse).